We begin with the raw amino-acid sequence, 313 residues long: GMP synthase [glutamine-hydrolyzing] subunit B (313 aa).

In terms of domain architecture, GMPS ATP-PPase spans 6–190 (KVWEKFIEEK…LGLPEKIYNR (185 aa)). Position 33 to 39 (33 to 39 (SGGVDSS)) interacts with ATP.

Heterodimer composed of a glutamine amidotransferase subunit (A) and a GMP-binding subunit (B).

It catalyses the reaction XMP + L-glutamine + ATP + H2O = GMP + L-glutamate + AMP + diphosphate + 2 H(+). It functions in the pathway purine metabolism; GMP biosynthesis; GMP from XMP (L-Gln route): step 1/1. Functionally, catalyzes the synthesis of GMP from XMP. The chain is GMP synthase [glutamine-hydrolyzing] subunit B (guaAB) from Pyrococcus furiosus (strain ATCC 43587 / DSM 3638 / JCM 8422 / Vc1).